A 40-amino-acid polypeptide reads, in one-letter code: Photosystem II reaction center protein J (40 aa).

A helical transmembrane segment spans residues 8–28; the sequence is IPLWIIGTVTGILVIGLIGIF.

Belongs to the PsbJ family. In terms of assembly, PSII is composed of 1 copy each of membrane proteins PsbA, PsbB, PsbC, PsbD, PsbE, PsbF, PsbH, PsbI, PsbJ, PsbK, PsbL, PsbM, PsbT, PsbX, PsbY, PsbZ, Psb30/Ycf12, at least 3 peripheral proteins of the oxygen-evolving complex and a large number of cofactors. It forms dimeric complexes.

It is found in the plastid. The protein resides in the chloroplast thylakoid membrane. Functionally, one of the components of the core complex of photosystem II (PSII). PSII is a light-driven water:plastoquinone oxidoreductase that uses light energy to abstract electrons from H(2)O, generating O(2) and a proton gradient subsequently used for ATP formation. It consists of a core antenna complex that captures photons, and an electron transfer chain that converts photonic excitation into a charge separation. This chain is Photosystem II reaction center protein J, found in Eucalyptus globulus subsp. globulus (Tasmanian blue gum).